We begin with the raw amino-acid sequence, 487 residues long: Serine/threonine-protein kinase 4 (487 aa).

Residue methionine 1 is modified to N-acetylmethionine. Threonine 3 is modified (phosphothreonine). The Protein kinase domain occupies 30–281 (FDVLEKLGEG…ATQLLQHPFV (252 aa)). Residues 36–44 (LGEGSYGSV) and lysine 59 each bind ATP. Residue aspartate 149 is the Proton acceptor of the active site. Residue threonine 183 is modified to Phosphothreonine; by autocatalysis. Serine 265 bears the Phosphoserine mark. Positions 290–310 (LRDLINEAMDVKLKRQESQQR) form a coiled coil. Residues 303–312 (KRQESQQREV) show a composition bias toward basic and acidic residues. The segment at 303–332 (KRQESQQREVDQDDEENSEEDEMDSGTMVR) is disordered. Acidic residues predominate over residues 313–326 (DQDDEENSEEDEMD). Position 320 is a phosphoserine (serine 320). Residues threonine 340 and threonine 367 each carry the phosphothreonine modification. Threonine 387 carries the phosphothreonine; by PKB/AKT1 modification. Serine 410 and serine 414 each carry phosphoserine. Phosphotyrosine is present on tyrosine 433. The SARAH domain maps to 433–480 (YEFLKSWTVEDLQKRLLALDPMMEQEIEEIRQKYQSKRQPILDAIEAK).

It belongs to the protein kinase superfamily. STE Ser/Thr protein kinase family. STE20 subfamily. In terms of assembly, homodimer; mediated via the coiled-coil region. Interacts with NORE1, which inhibits autoactivation. Interacts with and stabilizes SAV1. Interacts with RASSF1. Interacts with FOXO3. Interacts with RASSF2 (via SARAH domain). Interacts with AR, PKB/AKT1, TNNI3 and SIRT1. Interacts with DLG5 (via PDZ domain 3). Interacts with MARK3 and SCRIB in the presence of DLG5. Mg(2+) serves as cofactor. In terms of processing, autophosphorylated on serine and threonine residues. Phosphorylation at Thr-387 by PKB/AKT1, leads to inhibition of its: kinase activity, nuclear translocation and autophosphorylation at Thr-183. It also diminishes its cleavage by caspases and its ability to phosphorylate FOXO3. Proteolytically cleaved by caspase-3 during apoptosis at Asp-326 and Asp-349 resulting in a 37 kDa or a 39 kDa subunit respectively. The 39 kDa subunit is further cleaved into the 37 kDa form. Proteolytic cleavage results in kinase activation and nuclear translocation of the truncated form (MST1/N). It is less likely that cleavage at Asp-349 is a prerequisite for activation as this site is not conserved in the murine ortholog.

It is found in the cytoplasm. Its subcellular location is the nucleus. The enzyme catalyses L-seryl-[protein] + ATP = O-phospho-L-seryl-[protein] + ADP + H(+). The catalysed reaction is L-threonyl-[protein] + ATP = O-phospho-L-threonyl-[protein] + ADP + H(+). With respect to regulation, inhibited by the C-terminal non-catalytic region. Activated by caspase-cleavage. Full activation also requires homodimerization and autophosphorylation of Thr-183. Activated by RASSF1 which acts by preventing its dephosphorylation. Stress-activated, pro-apoptotic kinase which, following caspase-cleavage, enters the nucleus and induces chromatin condensation followed by internucleosomal DNA fragmentation. Key component of the Hippo signaling pathway which plays a pivotal role in organ size control and tumor suppression by restricting proliferation and promoting apoptosis. The core of this pathway is composed of a kinase cascade wherein STK3/MST2 and STK4/MST1, in complex with its regulatory protein SAV1, phosphorylates and activates LATS1/2 in complex with its regulatory protein MOB1, which in turn phosphorylates and inactivates YAP1 oncoprotein and WWTR1/TAZ. Phosphorylation of YAP1 by LATS2 inhibits its translocation into the nucleus to regulate cellular genes important for cell proliferation, cell death, and cell migration. STK3/MST2 and STK4/MST1 are required to repress proliferation of mature hepatocytes, to prevent activation of facultative adult liver stem cells (oval cells), and to inhibit tumor formation. Phosphorylates 'Ser-14' of histone H2B (H2BS14ph) during apoptosis. Phosphorylates FOXO3 upon oxidative stress, which results in its nuclear translocation and cell death initiation. Phosphorylates MOBKL1A, MOBKL1B and RASSF2. Phosphorylates TNNI3 (cardiac Tn-I) and alters its binding affinity to TNNC1 (cardiac Tn-C) and TNNT2 (cardiac Tn-T). Phosphorylates FOXO1 on 'Ser-212' and regulates its activation and stimulates transcription of PMAIP1 in a FOXO1-dependent manner. Phosphorylates SIRT1 and inhibits SIRT1-mediated p53/TP53 deacetylation, thereby promoting p53/TP53 dependent transcription and apoptosis upon DNA damage. Acts as an inhibitor of PKB/AKT1. Phosphorylates AR on 'Ser-650' and suppresses its activity by intersecting with PKB/AKT1 signaling and antagonizing formation of AR-chromatin complexes. The protein is Serine/threonine-protein kinase 4 (STK4) of Macaca mulatta (Rhesus macaque).